The sequence spans 317 residues: Hairy/enhancer-of-split related with YRPW motif protein 1 (317 aa).

The segment at 1–59 is disordered; that stretch reads MKRNHDFSSSDSELDENIEVEKESADENAGANSPLGSMSPSTTSQVQARKRRRGIIEKR. Polar residues predominate over residues 30–47; the sequence is GANSPLGSMSPSTTSQVQ. Residues 48 to 103 form the bHLH domain; it reads ARKRRRGIIEKRRRDRINNSLSELRRLVPSAFEKQGSAKLEKAEILQMTVDHLKML. The Orange domain occupies 121 to 157; that stretch reads YRGLGFRECLAETARYLSIIEGLDNTDPLRIRLVSHL. Composition is skewed to low complexity over residues 193 to 226 and 248 to 264; these read QQQQQQGAPLARSTSSPPSSNSSSPSSSSPSAPS and PPSTSLPPGLTPPTASK. The segment at 193-264 is disordered; the sequence is QQQQQQGAPL…PGLTPPTASK (72 aa). Positions 307–310 match the YRPW motif motif; that stretch reads YRPW.

Belongs to the HEY family.

It is found in the nucleus. Functionally, transcriptional repressor which functions as a downstream effector of Notch signaling. In Danio rerio (Zebrafish), this protein is Hairy/enhancer-of-split related with YRPW motif protein 1 (hey1).